Reading from the N-terminus, the 434-residue chain is Histidinol dehydrogenase (434 aa).

NAD(+) contacts are provided by Tyr130, Gln188, and Asn211. The substrate site is built by Ser237, Gln259, and His262. 2 residues coordinate Zn(2+): Gln259 and His262. Catalysis depends on proton acceptor residues Glu326 and His327. Residues His327, Asp360, Glu414, and His419 each coordinate substrate. Asp360 provides a ligand contact to Zn(2+). Residue His419 participates in Zn(2+) binding.

It belongs to the histidinol dehydrogenase family. As to quaternary structure, homodimer. Zn(2+) is required as a cofactor.

It carries out the reaction L-histidinol + 2 NAD(+) + H2O = L-histidine + 2 NADH + 3 H(+). The protein operates within amino-acid biosynthesis; L-histidine biosynthesis; L-histidine from 5-phospho-alpha-D-ribose 1-diphosphate: step 9/9. Functionally, catalyzes the sequential NAD-dependent oxidations of L-histidinol to L-histidinaldehyde and then to L-histidine. This Salmonella choleraesuis (strain SC-B67) protein is Histidinol dehydrogenase.